Here is a 1072-residue protein sequence, read N- to C-terminus: Carbamoyl phosphate synthase large chain (1072 aa).

Residues 1–401 are carboxyphosphate synthetic domain; sequence MPKRLDINTI…SLLKAVRSLE (401 aa). ATP-binding residues include Arg129, Arg169, Gly175, Gly176, Lys208, Ile210, Glu215, Gly241, Val242, His243, Gln284, and Glu298. Residues 133–327 enclose the ATP-grasp 1 domain; the sequence is RTLMQELNEP…IAKLAAKIAV (195 aa). Mg(2+) is bound by residues Gln284, Glu298, and Asn300. Mn(2+)-binding residues include Gln284, Glu298, and Asn300. Positions 402–546 are oligomerization domain; that stretch reads LGIYHLELDH…YSTYADENEL (145 aa). The tract at residues 547 to 929 is carbamoyl phosphate synthetic domain; that stretch reads IVTDRKSVVV…ALYKGLVASG (383 aa). The ATP-grasp 2 domain occupies 671-861; it reads EAALTKLGIP…MANVATKVIL (191 aa). ATP contacts are provided by Arg707, Arg746, Glu752, Gly777, Val778, His779, Ser780, Gln820, and Glu832. Mg(2+) is bound by residues Gln820, Glu832, and Asn834. Residues Gln820, Glu832, and Asn834 each coordinate Mn(2+). Positions 930 to 1072 constitute an MGS-like domain; that stretch reads INIPTHGSVI…QTKRHEVVHA (143 aa). The interval 930 to 1072 is allosteric domain; the sequence is INIPTHGSVI…QTKRHEVVHA (143 aa).

Belongs to the CarB family. Composed of two chains; the small (or glutamine) chain promotes the hydrolysis of glutamine to ammonia, which is used by the large (or ammonia) chain to synthesize carbamoyl phosphate. Tetramer of heterodimers (alpha,beta)4. Mg(2+) serves as cofactor. Mn(2+) is required as a cofactor.

The enzyme catalyses hydrogencarbonate + L-glutamine + 2 ATP + H2O = carbamoyl phosphate + L-glutamate + 2 ADP + phosphate + 2 H(+). It catalyses the reaction hydrogencarbonate + NH4(+) + 2 ATP = carbamoyl phosphate + 2 ADP + phosphate + 2 H(+). It functions in the pathway amino-acid biosynthesis; L-arginine biosynthesis; carbamoyl phosphate from bicarbonate: step 1/1. It participates in pyrimidine metabolism; UMP biosynthesis via de novo pathway; (S)-dihydroorotate from bicarbonate: step 1/3. Functionally, large subunit of the glutamine-dependent carbamoyl phosphate synthetase (CPSase). CPSase catalyzes the formation of carbamoyl phosphate from the ammonia moiety of glutamine, carbonate, and phosphate donated by ATP, constituting the first step of 2 biosynthetic pathways, one leading to arginine and/or urea and the other to pyrimidine nucleotides. The large subunit (synthetase) binds the substrates ammonia (free or transferred from glutamine from the small subunit), hydrogencarbonate and ATP and carries out an ATP-coupled ligase reaction, activating hydrogencarbonate by forming carboxy phosphate which reacts with ammonia to form carbamoyl phosphate. The polypeptide is Carbamoyl phosphate synthase large chain (Bacillus anthracis (strain A0248)).